A 132-amino-acid polypeptide reads, in one-letter code: Chemokine-like protein TAFA-5 (132 aa).

Residues 1–43 form the signal peptide; that stretch reads MAPSPRTSSRQDATALPSMSSTFWAFMILASLLIAYCSQLAAG. N-linked (GlcNAc...) asparagine glycosylation is present at N113.

This sequence belongs to the TAFA family. As to expression, expressed in the subcutaneous, brown, epididymal and perirenal adipose tissue (at protein level).

The protein localises to the secreted. Functionally, acts as a chemokine-like protein by regulating cell proliferation and migration through activation of G protein-coupled receptors (GPCRs), such as S1PR2 and FPR2. Stimulates chemotactic migration of macrophages mediated by the MAPK3/ERK1 and AKT1 pathway. Blocks TNFSF11/RANKL-induced osteoclast formation from macrophages by inhibiting up-regulation of osteoclast fusogenic and differentiation genes. Stimulation of macrophage migration and inhibition of osteoclast formation is mediated through the GPCR FPR2. Acts as an adipokine by negatively regulating vascular smooth muscle cell (VSMC) proliferation and migration in response to platelet-derived growth factor stimulation via GPCR S1PR2 and G protein GNA12/GNA13-transmitted RHOA signaling. Inhibits injury-induced cell proliferation and neointima formation in the femoral arteries. The polypeptide is Chemokine-like protein TAFA-5 (Tafa5) (Mus musculus (Mouse)).